The sequence spans 368 residues: Queuine tRNA-ribosyltransferase (368 aa).

The active-site Proton acceptor is the Asp89. Substrate-binding positions include 89–93 (DSGGF), Asp143, and Gly216. Positions 247–253 (GVGKPED) are RNA binding. Asp266 acts as the Nucleophile in catalysis. Residues 271–275 (TRNAR) are RNA binding; important for wobble base 34 recognition. Residues Cys304, Cys306, Cys309, and His335 each coordinate Zn(2+).

The protein belongs to the queuine tRNA-ribosyltransferase family. As to quaternary structure, homodimer. Within each dimer, one monomer is responsible for RNA recognition and catalysis, while the other monomer binds to the replacement base PreQ1. Zn(2+) serves as cofactor.

The catalysed reaction is 7-aminomethyl-7-carbaguanine + guanosine(34) in tRNA = 7-aminomethyl-7-carbaguanosine(34) in tRNA + guanine. The protein operates within tRNA modification; tRNA-queuosine biosynthesis. Functionally, catalyzes the base-exchange of a guanine (G) residue with the queuine precursor 7-aminomethyl-7-deazaguanine (PreQ1) at position 34 (anticodon wobble position) in tRNAs with GU(N) anticodons (tRNA-Asp, -Asn, -His and -Tyr). Catalysis occurs through a double-displacement mechanism. The nucleophile active site attacks the C1' of nucleotide 34 to detach the guanine base from the RNA, forming a covalent enzyme-RNA intermediate. The proton acceptor active site deprotonates the incoming PreQ1, allowing a nucleophilic attack on the C1' of the ribose to form the product. After dissociation, two additional enzymatic reactions on the tRNA convert PreQ1 to queuine (Q), resulting in the hypermodified nucleoside queuosine (7-(((4,5-cis-dihydroxy-2-cyclopenten-1-yl)amino)methyl)-7-deazaguanosine). This chain is Queuine tRNA-ribosyltransferase, found in Buchnera aphidicola subsp. Schizaphis graminum (strain Sg).